An 817-amino-acid polypeptide reads, in one-letter code: ABC transporter G family member STR (817 aa).

A disordered region spans residues methionine 1–asparagine 30. The Cytoplasmic segment spans residues methionine 1–proline 542. An ABC transporter domain is found at leucine 43–aspartate 294. An ATP-binding site is contributed by glycine 87 to serine 94. 3 disordered regions span residues glutamine 321 to threonine 349, glycine 362 to arginine 395, and arginine 439 to serine 463. The segment covering glycine 362–phenylalanine 375 has biased composition (polar residues). A compositionally biased stretch (acidic residues) spans leucine 377–phenylalanine 388. A helical membrane pass occupies residues glutamate 543–phenylalanine 563. The Extracellular segment spans residues lysine 564–asparagine 579. A helical membrane pass occupies residues phenylalanine 580–isoleucine 600. The Cytoplasmic segment spans residues methionine 601–valine 621. The chain crosses the membrane as a helical span at residues isoleucine 622–isoleucine 642. Over threonine 643 to tryptophan 657 the chain is Extracellular. Residues methionine 658–valine 678 form a helical membrane-spanning segment. Residues proline 679–tyrosine 681 are Cytoplasmic-facing. A helical transmembrane segment spans residues isoleucine 682 to phenylalanine 702. Topologically, residues leucine 703–tryptophan 787 are extracellular. Asparagine 762 is a glycosylation site (N-linked (GlcNAc...) asparagine). The helical transmembrane segment at tyrosine 788–leucine 808 threads the bilayer. The Cytoplasmic portion of the chain corresponds to arginine 809–lysine 817.

This sequence belongs to the ABC transporter superfamily. ABCG family. Stunted arbuscule (STR) subfamily. Heterodimerizes with STR2; the resulting transporter is located in the peri-arbuscular membrane. As to expression, expressed constitutively in the vascular tissue of roots.

The protein localises to the cell membrane. Together with STR2, required for arbuscule development in arbuscular mycorrhizal (AM) symbiosis. The chain is ABC transporter G family member STR from Medicago truncatula (Barrel medic).